Reading from the N-terminus, the 500-residue chain is ATP synthase subunit alpha (500 aa).

169–176 (GDRQTGKT) serves as a coordination point for ATP.

This sequence belongs to the ATPase alpha/beta chains family. F-type ATPases have 2 components, CF(1) - the catalytic core - and CF(0) - the membrane proton channel. CF(1) has five subunits: alpha(3), beta(3), gamma(1), delta(1), epsilon(1). CF(0) has three main subunits: a(1), b(2) and c(9-12). The alpha and beta chains form an alternating ring which encloses part of the gamma chain. CF(1) is attached to CF(0) by a central stalk formed by the gamma and epsilon chains, while a peripheral stalk is formed by the delta and b chains.

Its subcellular location is the cell membrane. The enzyme catalyses ATP + H2O + 4 H(+)(in) = ADP + phosphate + 5 H(+)(out). In terms of biological role, produces ATP from ADP in the presence of a proton gradient across the membrane. The alpha chain is a regulatory subunit. The polypeptide is ATP synthase subunit alpha (Lactococcus lactis subsp. cremoris (strain MG1363)).